The chain runs to 557 residues: NADP-dependent malic enzyme (557 aa).

The Proton donor role is filled by Y91. NADP(+) is bound at residue R144. K162 acts as the Proton acceptor in catalysis. 3 residues coordinate a divalent metal cation: E234, D235, and D258. Residues D258, 290 to 307 (GAGE…MAME), and N397 contribute to the NADP(+) site.

The protein belongs to the malic enzymes family. Homotetramer. Requires Mg(2+) as cofactor. Mn(2+) serves as cofactor.

The protein localises to the cytoplasm. The catalysed reaction is (S)-malate + NADP(+) = pyruvate + CO2 + NADPH. It carries out the reaction oxaloacetate + H(+) = pyruvate + CO2. This chain is NADP-dependent malic enzyme (ME1), found in Anas platyrhynchos (Mallard).